The primary structure comprises 389 residues: tRNA-specific 2-thiouridylase MnmA (389 aa).

ATP-binding positions include 35-42 (GMSGGVDS) and Met-61. The tract at residues 121 to 123 (NPD) is interaction with target base in tRNA. Residue Cys-126 is the Nucleophile of the active site. Cysteines 126 and 223 form a disulfide. Gly-151 lines the ATP pocket. The interval 173–175 (KDQ) is interaction with tRNA. Cys-223 (cysteine persulfide intermediate) is an active-site residue. The interaction with tRNA stretch occupies residues 335 to 336 (RY).

Belongs to the MnmA/TRMU family.

Its subcellular location is the cytoplasm. It catalyses the reaction S-sulfanyl-L-cysteinyl-[protein] + uridine(34) in tRNA + AH2 + ATP = 2-thiouridine(34) in tRNA + L-cysteinyl-[protein] + A + AMP + diphosphate + H(+). In terms of biological role, catalyzes the 2-thiolation of uridine at the wobble position (U34) of tRNA, leading to the formation of s(2)U34. The chain is tRNA-specific 2-thiouridylase MnmA from Actinobacillus succinogenes (strain ATCC 55618 / DSM 22257 / CCUG 43843 / 130Z).